Reading from the N-terminus, the 247-residue chain is tRNA pseudouridine synthase A (247 aa).

The active-site Nucleophile is the aspartate 52. Tyrosine 113 lines the substrate pocket.

Belongs to the tRNA pseudouridine synthase TruA family. Homodimer.

It catalyses the reaction uridine(38/39/40) in tRNA = pseudouridine(38/39/40) in tRNA. In terms of biological role, formation of pseudouridine at positions 38, 39 and 40 in the anticodon stem and loop of transfer RNAs. This chain is tRNA pseudouridine synthase A, found in Bartonella henselae (strain ATCC 49882 / DSM 28221 / CCUG 30454 / Houston 1) (Rochalimaea henselae).